The primary structure comprises 217 residues: Probable transaldolase (217 aa).

The Schiff-base intermediate with substrate role is filled by Lys83.

Belongs to the transaldolase family. Type 3B subfamily.

Its subcellular location is the cytoplasm. It catalyses the reaction D-sedoheptulose 7-phosphate + D-glyceraldehyde 3-phosphate = D-erythrose 4-phosphate + beta-D-fructose 6-phosphate. The protein operates within carbohydrate degradation; pentose phosphate pathway; D-glyceraldehyde 3-phosphate and beta-D-fructose 6-phosphate from D-ribose 5-phosphate and D-xylulose 5-phosphate (non-oxidative stage): step 2/3. Transaldolase is important for the balance of metabolites in the pentose-phosphate pathway. This Rhizobium meliloti (strain 1021) (Ensifer meliloti) protein is Probable transaldolase.